Reading from the N-terminus, the 447-residue chain is MGKEKFHINIVVIGHVDSGKSTTTGHLIYKLGGIDKRVIERFEKEAAEMNKRSFKYAWVLDKLKAERERGITIDIALWKFETTKYYCTVIDAPGHRDFIKNMITGTSQADCAVLIIDSTTGGFEAGISKDGQTREHALLAFTLGVKQMICCCNKMDATTPKYSKARYDEIVKEVSSYLKKVGYNPDKIPFVPISGFEGDNMIERSTNLDWYKGPTLLEALDQINDAKRPSDKPLRLPLQDVYKIGGIGTVPVGRVETGVLKPGMVVTFGPTGLTTEVKSVEMHHEALQEALPGDNVGFNVKNVAVKDLKRGFVASNSKDDPAKGAASFTSQVIIMNHPGQIGNGYAPVLDCHTSHIAVKFAEILTKIDRRSGKEIEKEPKFLKNGDAGMVKMIPTKPMVVETFSEYPPLGRFAVRDMRQTVAVGVIKNVDKKDPTGAKVTKAAQKKK.

One can recognise a tr-type G domain in the interval 5–230 (KFHINIVVIG…DQINDAKRPS (226 aa)). Positions 14–21 (GHVDSGKS) are G1. Residue 14-21 (GHVDSGKS) coordinates GTP. Position 55 is an N6,N6-dimethyllysine (Lys55). Residues 70 to 74 (GITID) are G2. At Lys79 the chain carries N6,N6,N6-trimethyllysine. The G3 stretch occupies residues 91 to 94 (DAPG). GTP is bound by residues 91–95 (DAPGH) and 153–156 (NKMD). The interval 153–156 (NKMD) is G4. Position 187 is an N6,N6,N6-trimethyllysine (Lys187). The G5 stretch occupies residues 194-196 (SGF). The residue at position 261 (Lys261) is an N6-methyllysine. 5-glutamyl glycerylphosphorylethanolamine is present on Glu289. An N6,N6,N6-trimethyllysine modification is found at Lys306. The residue at position 362 (Glu362) is a 5-glutamyl glycerylphosphorylethanolamine. N6,N6,N6-trimethyllysine is present on Lys396.

The protein belongs to the TRAFAC class translation factor GTPase superfamily. Classic translation factor GTPase family. EF-Tu/EF-1A subfamily. Was detected in all tissues examined but was most abundant in roots and salt-adapted cultured cells.

The protein resides in the cytoplasm. Its function is as follows. This protein promotes the GTP-dependent binding of aminoacyl-tRNA to the A-site of ribosomes during protein biosynthesis. In Nicotiana tabacum (Common tobacco), this protein is Elongation factor 1-alpha.